A 183-amino-acid chain; its full sequence is Ribosome maturation factor RimP (183 aa).

Belongs to the RimP family.

The protein localises to the cytoplasm. In terms of biological role, required for maturation of 30S ribosomal subunits. This chain is Ribosome maturation factor RimP, found in Leptothrix cholodnii (strain ATCC 51168 / LMG 8142 / SP-6) (Leptothrix discophora (strain SP-6)).